The following is a 347-amino-acid chain: Melanoma-associated antigen B10 (347 aa).

Positions 1–18 (MPRGQKSKLRAREKRRQA) are enriched in basic residues. 2 disordered regions span residues 1 to 20 (MPRG…QARG) and 56 to 92 (GASN…QMEE). Residues 67–78 (AQSTSTSATAAS) show a composition bias toward low complexity. Positions 81-92 (RHPEGVNDQMEE) are enriched in basic and acidic residues. Residues 111-310 (VDEKVIILVH…SEFSNWYTEA (200 aa)) form the MAGE domain. Positions 328–347 (VSATAGARSKVKSSKSSQLQ) are disordered.

The polypeptide is Melanoma-associated antigen B10 (MAGEB10) (Homo sapiens (Human)).